The primary structure comprises 312 residues: tRNA dimethylallyltransferase (312 aa).

11 to 18 (GLTATGKT) is an ATP binding site. Residue 13–18 (TATGKT) participates in substrate binding. An interaction with substrate tRNA region spans residues 36-39 (DSMC).

The protein belongs to the IPP transferase family. As to quaternary structure, monomer. It depends on Mg(2+) as a cofactor.

It catalyses the reaction adenosine(37) in tRNA + dimethylallyl diphosphate = N(6)-dimethylallyladenosine(37) in tRNA + diphosphate. Its function is as follows. Catalyzes the transfer of a dimethylallyl group onto the adenine at position 37 in tRNAs that read codons beginning with uridine, leading to the formation of N6-(dimethylallyl)adenosine (i(6)A). The chain is tRNA dimethylallyltransferase from Caldicellulosiruptor bescii (strain ATCC BAA-1888 / DSM 6725 / KCTC 15123 / Z-1320) (Anaerocellum thermophilum).